Reading from the N-terminus, the 370-residue chain is MEISTITMILDTTLVAVFAWVAYKTGSLIWKYTPYSYPNARIRAMEARLLSDQRLLELAESKELENFVVNLEDSDYGKRLSELKSYSVEEIEKALDLSFVDTILLFQKIMPKRVRGFFEVMLEEWDVRNIVNVVKAKITGLPAQDFVIPVGKILNKVKAMVEAKTMEEILVILEGTEYEEPVRKLILKEINLPEFEHLMYSLHYQKLLNYVNSRKGEEKVILSEFVSSLIDSKNISLILRAKASGINAEKLKIMLIPGGSISRNVLEAMISAEDPLMALTELEKTKYAEVVKNSREAVEKGDISTVEKQLRRYIQQRMKEQSQFYPLSVAVALSYMLQKENEIRKLKAIVRLIADRVRPERIKEIVGEVT.

It belongs to the V-ATPase V0D/AC39 subunit family. In terms of assembly, has multiple subunits with at least A(3), B(3), C, D, E, F, H, I and proteolipid K(x).

The protein localises to the cell membrane. Component of the A-type ATP synthase that produces ATP from ADP in the presence of a proton gradient across the membrane. The polypeptide is A-type ATP synthase subunit C (Pyrococcus furiosus (strain ATCC 43587 / DSM 3638 / JCM 8422 / Vc1)).